The primary structure comprises 325 residues: MSLLRSLRVFLVARTGSYPAGSLLRQSPQPRHTFYAGPRLSASASSKELLMKLRRKTGYSFVNCKKALETCGGDLKQAEIWLHKEAQKEGWSKAAKLQGRKTKEGLIGLLQEGNTTVLVEVNCETDFVSRNLKFQLLVQQVALGTMMHCQTLKDQPSAYSKGFLNSSELSGLPAGPDREGSLKDQLALAIGKLGENMILKRAAWVKVPSGFYVGSYVHGAMQSPSLHKLVLGKYGALVICETSEQKTNLEDVGRRLGQHVVGMAPLSVGSLDDEPGGEAETKMLSQPYLLDPSITLGQYVQPQGVSVVDFVRFECGEGEEAAETE.

A mitochondrion-targeting transit peptide spans 1–45; that stretch reads MSLLRSLRVFLVARTGSYPAGSLLRQSPQPRHTFYAGPRLSASAS. N6-succinyllysine occurs at positions 76, 133, and 192. Residue Ser270 is modified to Phosphoserine. Position 324 is a phosphothreonine (Thr324).

It belongs to the EF-Ts family. In terms of tissue distribution, expressed in all tissues, with the highest levels of expression in skeletal muscle, liver and kidney.

The protein resides in the mitochondrion. Its function is as follows. Associates with the EF-Tu.GDP complex and induces the exchange of GDP to GTP. It remains bound to the aminoacyl-tRNA.EF-Tu.GTP complex up to the GTP hydrolysis stage on the ribosome. The protein is Elongation factor Ts, mitochondrial of Homo sapiens (Human).